The sequence spans 345 residues: Ferrochelatase (345 aa).

Histidine 199 and glutamate 302 together coordinate Fe cation.

The protein belongs to the ferrochelatase family.

Its subcellular location is the cytoplasm. The catalysed reaction is heme b + 2 H(+) = protoporphyrin IX + Fe(2+). It participates in porphyrin-containing compound metabolism; protoheme biosynthesis; protoheme from protoporphyrin-IX: step 1/1. In terms of biological role, catalyzes the ferrous insertion into protoporphyrin IX. The polypeptide is Ferrochelatase (Porphyromonas gingivalis (strain ATCC 33277 / DSM 20709 / CIP 103683 / JCM 12257 / NCTC 11834 / 2561)).